A 396-amino-acid chain; its full sequence is S-adenosylmethionine synthase (396 aa).

H14 provides a ligand contact to ATP. Mg(2+) is bound at residue D16. E42 lines the K(+) pocket. L-methionine-binding residues include E55 and Q98. Positions 98–108 (QSPDIALGVNK) are flexible loop. Residues 174–176 (DGK), 241–242 (RF), D250, 256–257 (RK), A273, and K277 each bind ATP. D250 is an L-methionine binding site. K281 contacts L-methionine.

This sequence belongs to the AdoMet synthase family. As to quaternary structure, homotetramer; dimer of dimers. Mg(2+) is required as a cofactor. K(+) serves as cofactor.

The protein resides in the cytoplasm. The enzyme catalyses L-methionine + ATP + H2O = S-adenosyl-L-methionine + phosphate + diphosphate. It functions in the pathway amino-acid biosynthesis; S-adenosyl-L-methionine biosynthesis; S-adenosyl-L-methionine from L-methionine: step 1/1. Its function is as follows. Catalyzes the formation of S-adenosylmethionine (AdoMet) from methionine and ATP. The overall synthetic reaction is composed of two sequential steps, AdoMet formation and the subsequent tripolyphosphate hydrolysis which occurs prior to release of AdoMet from the enzyme. The polypeptide is S-adenosylmethionine synthase (Pseudothermotoga lettingae (strain ATCC BAA-301 / DSM 14385 / NBRC 107922 / TMO) (Thermotoga lettingae)).